The sequence spans 1198 residues: Structural polyprotein (1198 aa).

An interaction with host EXOC1 region spans residues 2–15 (TKKPGGPGKNRAIN). The segment at 37–72 (LLDGRGPVRFVLALITFFKFTALAPTKALLGRWRAV) is hydrophobic; homodimerization of capsid protein C. A propeptide spans 106-127 (GGNESSIMWLASLAIVIACAGA) (ER anchor for the capsid protein C, removed in mature form by serine protease NS3). Residues 110 to 130 (SSIMWLASLAIVIACAGAMKL) form a helical membrane-spanning segment. Asn142 is a glycosylation site (N-linked (GlcNAc...) asparagine; by host). 2 helical membrane-spanning segments follow: residues 254 to 274 (WIIR…MLGS) and 280 to 294 (VVFT…PAYS). 6 disulfide bridges follow: Cys297-Cys324, Cys354-Cys410, Cys354-Cys415, Cys368-Cys399, Cys386-Cys410, and Cys386-Cys415. Positions 392 to 405 (DRGWGNGCGLFGKG) are fusion peptide. Residue Asn448 is glycosylated (N-linked (GlcNAc...) asparagine; by host). Cystine bridges form between Cys484–Cys581 and Cys598–Cys629. 2 consecutive transmembrane segments (helical) span residues 747-767 (FGGM…WMGV) and 774-794 (IALA…NVHA). Intrachain disulfides connect Cys798-Cys809, Cys849-Cys937, Cys973-Cys1017, Cys1074-Cys1123, Cys1085-Cys1106, and Cys1107-Cys1110. 2 N-linked (GlcNAc...) asparagine; by host glycosylation sites follow: Asn924 and Asn1001. Residues 1151–1178 (MIDPFSAGPSGDVSGHPGGPSQEVDGQI) are disordered.

In terms of assembly, homodimer. Interacts (via N-terminus) with host EXOC1 (via C-terminus); this interaction results in EXOC1 degradation through the proteasome degradation pathway. Interacts with host CAPRIN1; this interaction is involved in the suppression of the integrated stress response. As to quaternary structure, forms heterodimers with envelope protein E in the endoplasmic reticulum and Golgi. Homodimer; in the endoplasmic reticulum and Golgi. Interacts with protein prM. Interacts with non-structural protein 1. Genome polyprotein: Specific enzymatic cleavages in vivo yield mature proteins. Cleavages in the lumen of endoplasmic reticulum are performed by host signal peptidase, whereas cleavages in the cytoplasmic side are performed by serine protease NS3. Signal cleavage at the 2K-4B site requires a prior NS3 protease-mediated cleavage at the 4A-2K site. In terms of processing, cleaved in post-Golgi vesicles by a host furin, releasing the mature small envelope protein M, and peptide pr. This cleavage is incomplete as up to 30% of viral particles still carry uncleaved prM. Post-translationally, N-glycosylated.

Its subcellular location is the secreted. It is found in the virion membrane. The protein localises to the host endoplasmic reticulum membrane. Functionally, plays a role in virus budding by binding to the cell membrane and gathering the viral RNA into a nucleocapsid that forms the core of a mature virus particle. During virus entry, may induce genome penetration into the host cytoplasm after hemifusion induced by the surface proteins. Can migrate to the cell nucleus where it modulates host functions. Overcomes the anti-viral effects of host EXOC1 by sequestering and degrading the latter through the proteasome degradation pathway. Inhibits the integrated stress response (ISR) in the infected cell by binding to host CAPRIN1. In terms of biological role, inhibits RNA silencing by interfering with host Dicer. Prevents premature fusion activity of envelope proteins in trans-Golgi by binding to envelope protein E at pH6.0. After virion release in extracellular space, gets dissociated from E dimers. Its function is as follows. Acts as a chaperone for envelope protein E during intracellular virion assembly by masking and inactivating envelope protein E fusion peptide. prM is the only viral peptide matured by host furin in the trans-Golgi network probably to avoid catastrophic activation of the viral fusion activity in acidic Golgi compartment prior to virion release. prM-E cleavage is inefficient, and many virions are only partially matured. These uncleaved prM would play a role in immune evasion. Functionally, may play a role in virus budding. Exerts cytotoxic effects by activating a mitochondrial apoptotic pathway through M ectodomain. May display a viroporin activity. In terms of biological role, binds to host cell surface receptor and mediates fusion between viral and cellular membranes. Envelope protein is synthesized in the endoplasmic reticulum in the form of heterodimer with protein prM. They play a role in virion budding in the ER, and the newly formed immature particle is covered with 60 spikes composed of heterodimer between precursor prM and envelope protein E. The virion is transported to the Golgi apparatus where the low pH causes dissociation of PrM-E heterodimers and formation of E homodimers. prM-E cleavage is inefficient, and many virions are only partially matured. These uncleaved prM would play a role in immune evasion. This Ardeidae (herons) protein is Structural polyprotein.